The chain runs to 457 residues: Gustatory and odorant receptor 24 (457 aa).

Residues 1 to 115 (MSLYFNADTM…GGTAFVLASP (115 aa)) lie on the Cytoplasmic side of the membrane. A helical membrane pass occupies residues 116–136 (SMTYCVLFFLLLTVYIAFILL). The Extracellular segment spans residues 137–152 (NRIEIVRTLEGRFEES). Residues 153–173 (VIAYLFIVNILPILIIPLMWY) traverse the membrane as a helical segment. Topologically, residues 174–209 (ESRKVVSVVNGWVDFETVYRETTGRALELRLRTKAQ) are cytoplasmic. A helical membrane pass occupies residues 210–230 (VIAILLPILCSLSVAITHVTM). Topologically, residues 231-237 (VDFKLLQ) are extracellular. The chain crosses the membrane as a helical span at residues 238–258 (VIPYCVLDTITYMMGGYWYMA). Residues 259–309 (CETLSITAKILAEDFQRALRHVGPAAKVSEYRSLWLRLSKLARDTGFSTCY) lie on the Cytoplasmic side of the membrane. Residues 310 to 330 (TFTFICLYLFFIITLSIYGLM) traverse the membrane as a helical segment. Residues 331–341 (SQISDGFGVKD) are Extracellular-facing. A helical membrane pass occupies residues 342-362 (IGLAVTAFCSVGLLFYICDEA). Residues 363–421 (HYASFNVRTNFQKKLLMVELSWMNTDAQTEINMFLRATEMNPSSINLGGFFDVNRTLFK) are Cytoplasmic-facing. Residues 422 to 442 (SLLATMVTYLVVLLQFQISIP) traverse the membrane as a helical segment. Topologically, residues 443–457 (DEPSAMLMHSNSSHS) are extracellular. Asn-453 carries an N-linked (GlcNAc...) asparagine glycan.

This sequence belongs to the insect chemoreceptor superfamily. Gustatory receptor (GR) family. Gr21a subfamily. As to expression, carbon dioxide-responsive neurons coexpress GPRgr22 and GPRgr24 in the maxillary palp, at both larval and adult life stages.

The protein resides in the cell membrane. Its function is as follows. Gustatory receptor which mediates acceptance or avoidance behavior, depending on its substrates. GPRgr22 and GPRgr24 together are sufficient for olfactory carbon dioxide-chemosensation. In Anopheles gambiae (African malaria mosquito), this protein is Gustatory and odorant receptor 24.